The chain runs to 215 residues: Ribose-5-phosphate isomerase A (215 aa).

Residues 26-29 (TGST), 79-82 (DGAD), and 92-95 (KGGG) each bind substrate. Residue Glu-101 is the Proton acceptor of the active site. Lys-119 provides a ligand contact to substrate.

Belongs to the ribose 5-phosphate isomerase family. In terms of assembly, homodimer.

The catalysed reaction is aldehydo-D-ribose 5-phosphate = D-ribulose 5-phosphate. Its pathway is carbohydrate degradation; pentose phosphate pathway; D-ribose 5-phosphate from D-ribulose 5-phosphate (non-oxidative stage): step 1/1. Functionally, catalyzes the reversible conversion of ribose-5-phosphate to ribulose 5-phosphate. The polypeptide is Ribose-5-phosphate isomerase A (Xanthomonas euvesicatoria pv. vesicatoria (strain 85-10) (Xanthomonas campestris pv. vesicatoria)).